Reading from the N-terminus, the 460-residue chain is Lipase member H (460 aa).

Residues 1 to 24 form the signal peptide; it reads MLLRFYFNGLLFVGCLLSWGRSDT. N-linked (GlcNAc...) asparagine glycosylation is found at Asn-67 and Asn-75. Catalysis depends on Ser-163, which acts as the Nucleophile. N-linked (GlcNAc...) asparagine glycosylation occurs at Asn-177. Catalysis depends on Asp-187, which acts as the Charge relay system. Residues Cys-242 and Cys-255 are joined by a disulfide bond. The Charge relay system role is filled by His-257. 2 disulfides stabilise this stretch: Cys-279–Cys-290 and Cys-293–Cys-301. N-linked (GlcNAc...) asparagine glycosylation is present at Asn-289. N-linked (GlcNAc...) asparagine glycosylation is present at Asn-366. Cys-436 and Cys-455 are oxidised to a cystine.

The protein belongs to the AB hydrolase superfamily. Lipase family.

It is found in the secreted. Its subcellular location is the cell membrane. It carries out the reaction 1-hexadecanoyl-2-(9Z-octadecenoyl)-sn-glycero-3-phosphate + H2O = 2-(9Z-octadecenoyl)-sn-glycero-3-phosphate + hexadecanoate + H(+). In terms of biological role, hydrolyzes specifically phosphatidic acid (PA) to produce 2-acyl lysophosphatidic acid (LPA; a potent bioactive lipid mediator) and fatty acid. Does not hydrolyze other phospholipids, like phosphatidylserine (PS), phosphatidylcholine (PC) and phosphatidylethanolamine (PE) or triacylglycerol (TG). In Xenopus tropicalis (Western clawed frog), this protein is Lipase member H (liph).